We begin with the raw amino-acid sequence, 118 residues long: Protein TusC (118 aa).

It belongs to the DsrF/TusC family. In terms of assembly, heterohexamer, formed by a dimer of trimers. The hexameric TusBCD complex contains 2 copies each of TusB, TusC and TusD. The TusBCD complex interacts with TusE.

The protein localises to the cytoplasm. Its function is as follows. Part of a sulfur-relay system required for 2-thiolation of 5-methylaminomethyl-2-thiouridine (mnm(5)s(2)U) at tRNA wobble positions. In Salmonella arizonae (strain ATCC BAA-731 / CDC346-86 / RSK2980), this protein is Protein TusC.